The primary structure comprises 432 residues: Adenylosuccinate synthetase (432 aa).

Residues 13–19 and 41–43 contribute to the GTP site; these read GDEGKGK and GHT. Residue aspartate 14 is the Proton acceptor of the active site. The Mg(2+) site is built by aspartate 14 and glycine 41. IMP is bound by residues 14 to 17, 39 to 42, threonine 130, arginine 144, glutamine 225, threonine 240, and arginine 304; these read DEGK and NAGH. Histidine 42 functions as the Proton donor in the catalytic mechanism. 300 to 306 lines the substrate pocket; the sequence is ATTGRRR. GTP is bound by residues arginine 306, 332-334, and 415-417; these read KLD and STG.

It belongs to the adenylosuccinate synthetase family. Homodimer. Requires Mg(2+) as cofactor.

It is found in the cytoplasm. It catalyses the reaction IMP + L-aspartate + GTP = N(6)-(1,2-dicarboxyethyl)-AMP + GDP + phosphate + 2 H(+). Its pathway is purine metabolism; AMP biosynthesis via de novo pathway; AMP from IMP: step 1/2. Its function is as follows. Plays an important role in the de novo pathway of purine nucleotide biosynthesis. Catalyzes the first committed step in the biosynthesis of AMP from IMP. This Sodalis glossinidius (strain morsitans) protein is Adenylosuccinate synthetase.